Here is a 266-residue protein sequence, read N- to C-terminus: Type III pantothenate kinase (266 aa).

Residue 9–16 (DAGNSRIK) participates in ATP binding. Substrate-binding positions include tyrosine 96 and 103-106 (GSDR). Residue aspartate 105 is the Proton acceptor of the active site. ATP is bound at residue threonine 129. Threonine 189 contacts substrate.

This sequence belongs to the type III pantothenate kinase family. Homodimer. NH4(+) is required as a cofactor. K(+) serves as cofactor.

It localises to the cytoplasm. It carries out the reaction (R)-pantothenate + ATP = (R)-4'-phosphopantothenate + ADP + H(+). It participates in cofactor biosynthesis; coenzyme A biosynthesis; CoA from (R)-pantothenate: step 1/5. In terms of biological role, catalyzes the phosphorylation of pantothenate (Pan), the first step in CoA biosynthesis. The chain is Type III pantothenate kinase from Burkholderia lata (strain ATCC 17760 / DSM 23089 / LMG 22485 / NCIMB 9086 / R18194 / 383).